Consider the following 700-residue polypeptide: Translation initiation factor IF-2 (700 aa).

Residues 58–85 (KKEVKKQKEPSKEKGKSSEQVKVKEKSK) form a disordered region. In terms of domain architecture, tr-type G spans 191-365 (PRPPVVTIMG…EMQEIRCIPD (175 aa)). Positions 200–207 (GHVDHGKT) are G1. 200–207 (GHVDHGKT) contributes to the GTP binding site. Residues 225-229 (GITQS) are G2. Positions 246–249 (DTPG) are G3. Residues 246 to 250 (DTPGH) and 300 to 303 (NKID) contribute to the GTP site. The tract at residues 300-303 (NKID) is G4. The tract at residues 337–339 (SAK) is G5.

The protein belongs to the TRAFAC class translation factor GTPase superfamily. Classic translation factor GTPase family. IF-2 subfamily.

Its subcellular location is the cytoplasm. One of the essential components for the initiation of protein synthesis. Protects formylmethionyl-tRNA from spontaneous hydrolysis and promotes its binding to the 30S ribosomal subunits. Also involved in the hydrolysis of GTP during the formation of the 70S ribosomal complex. This Petrotoga mobilis (strain DSM 10674 / SJ95) protein is Translation initiation factor IF-2.